The primary structure comprises 134 residues: Small ribosomal subunit protein uS8c (134 aa).

The protein belongs to the universal ribosomal protein uS8 family. As to quaternary structure, part of the 30S ribosomal subunit.

Its subcellular location is the plastid. It is found in the chloroplast. One of the primary rRNA binding proteins, it binds directly to 16S rRNA central domain where it helps coordinate assembly of the platform of the 30S subunit. This Arabidopsis thaliana (Mouse-ear cress) protein is Small ribosomal subunit protein uS8c (rps8).